The sequence spans 357 residues: Vomeronasal type-1 receptor 5 (357 aa).

At 1–3 (MLK) the chain is on the extracellular side. Residues 4 to 24 (LVIIENMAEIMLFSLDLLLFS) traverse the membrane as a helical segment. Over 25–52 (TDILCFNFPSKMIKLPGFITIQIFFYPQ) the chain is Cytoplasmic. A helical membrane pass occupies residues 53-73 (ASFGISANTILLLFHIFTFVF). Topologically, residues 74 to 81 (SHRSKSID) are extracellular. Residues 82–102 (MIISHLSLIHILLLFTQAILV) traverse the membrane as a helical segment. Topologically, residues 103 to 130 (SLDFFGSQNTQDDLRYKVIVFLNKVMRG) are cytoplasmic. The helical transmembrane segment at 131–151 (LSICTPCLLSVLQAIISPSIF) threads the bilayer. Over 152 to 163 (SLAKLKHPSASH) the chain is Extracellular. Residues 164–184 (ILGFFLFSWVLNMFIGVIFCC) traverse the membrane as a helical segment. Residues 185-269 (TLRLPPVKRG…RVSPVKRASQ (85 aa)) lie on the Cytoplasmic side of the membrane. Residues 270–290 (AILLLVSFVFTYWVDFTFSFS) form a helical membrane-spanning segment. At 291-300 (GGVTWINDSL) the chain is on the extracellular side. N-linked (GlcNAc...) asparagine glycosylation occurs at N297. The chain crosses the membrane as a helical span at residues 301–321 (LVWLQVIVANSYAAISPLMLI). The Cytoplasmic segment spans residues 322–357 (YADNQIFKTLQMLWFKYLSPPKLMLKFNRQCGSTKK).

This sequence belongs to the G-protein coupled receptor 1 family.

It is found in the cell membrane. In terms of biological role, putative pheromone receptor. The protein is Vomeronasal type-1 receptor 5 (VN1R5) of Homo sapiens (Human).